The primary structure comprises 232 residues: Large ribosomal subunit protein uL1 (232 aa).

Belongs to the universal ribosomal protein uL1 family. In terms of assembly, part of the 50S ribosomal subunit.

Binds directly to 23S rRNA. The L1 stalk is quite mobile in the ribosome, and is involved in E site tRNA release. Functionally, protein L1 is also a translational repressor protein, it controls the translation of the L11 operon by binding to its mRNA. This chain is Large ribosomal subunit protein uL1, found in Xylella fastidiosa (strain 9a5c).